A 219-amino-acid chain; its full sequence is KP6 killer toxin (219 aa).

A signal peptide spans 1–19 (MLIFSVLMYLGLLLAGASA). Residues 20-27 (LPNGLSPR) constitute a propeptide that is removed on maturation. 4 disulfide bridges follow: C32-C39, C43-C101, C45-C92, and C62-C78. N98 carries N-linked (GlcNAc...) asparagine; by host glycosylation. Residues 106–138 (KRTIQDSATDTVDLGAELHRDDPPPTASDIGKR) constitute a propeptide that is removed on maturation. The tract at residues 120 to 142 (GAELHRDDPPPTASDIGKRGKRP) is disordered.

As to quaternary structure, heterodimer of two small polypeptides that are not covalently linked.

It localises to the secreted. In terms of biological role, this protein is lethal to sensitive cells of the same or related species. The KP6 alpha subunit is known to recognize some cellular receptors before interaction of the complex with KP6 beta, precipitating cell death. The chain is KP6 killer toxin from Ustilago maydis P6 virus (UmV6).